The sequence spans 133 residues: uncharacterized protein (133 aa).

A helical membrane pass occupies residues 36-56 (LPMLIALACIFLLLATCLLFM). The segment at 105 to 133 (HGRPTVPRQPLPGPEDNRSHCDYMESTKM) is disordered. Residues 119 to 133 (EDNRSHCDYMESTKM) show a composition bias toward basic and acidic residues.

It is found in the membrane. This is an uncharacterized protein from Homo sapiens (Human).